A 341-amino-acid polypeptide reads, in one-letter code: Glucokinase (341 aa).

18-23 (GDIGGT) lines the ATP pocket.

Belongs to the bacterial glucokinase family.

It localises to the cytoplasm. The catalysed reaction is D-glucose + ATP = D-glucose 6-phosphate + ADP + H(+). This is Glucokinase from Mesorhizobium japonicum (strain LMG 29417 / CECT 9101 / MAFF 303099) (Mesorhizobium loti (strain MAFF 303099)).